Reading from the N-terminus, the 287-residue chain is Polyamine aminopropyltransferase (287 aa).

The 234-residue stretch at 5–238 (ETWHETLHDH…GIMTFAWASQ (234 aa)) folds into the PABS domain. Glutamine 33 is a binding site for S-methyl-5'-thioadenosine. Spermidine-binding residues include histidine 64 and aspartate 88. S-methyl-5'-thioadenosine-binding positions include glutamate 108 and 140 to 141 (DG). Residue aspartate 158 is the Proton acceptor of the active site. Residue 158–161 (DCTD) coordinates spermidine. Proline 165 contributes to the S-methyl-5'-thioadenosine binding site.

The protein belongs to the spermidine/spermine synthase family. As to quaternary structure, homodimer or homotetramer.

Its subcellular location is the cytoplasm. It catalyses the reaction S-adenosyl 3-(methylsulfanyl)propylamine + putrescine = S-methyl-5'-thioadenosine + spermidine + H(+). The protein operates within amine and polyamine biosynthesis; spermidine biosynthesis; spermidine from putrescine: step 1/1. Its function is as follows. Catalyzes the irreversible transfer of a propylamine group from the amino donor S-adenosylmethioninamine (decarboxy-AdoMet) to putrescine (1,4-diaminobutane) to yield spermidine. This is Polyamine aminopropyltransferase from Sodalis glossinidius (strain morsitans).